The chain runs to 481 residues: Eukaryotic translation initiation factor 3 subunit L (481 aa).

The interval 1–22 (MSVDARTAYPGSRPPANMQDES) is disordered. In terms of domain architecture, PCI spans 262–457 (DAIRTFSHIL…DLDYAIEGNL (196 aa)).

This sequence belongs to the eIF-3 subunit L family. In terms of assembly, component of the eukaryotic translation initiation factor 3 (eIF-3) complex.

Its subcellular location is the cytoplasm. Its function is as follows. Component of the eukaryotic translation initiation factor 3 (eIF-3) complex, which is involved in protein synthesis of a specialized repertoire of mRNAs and, together with other initiation factors, stimulates binding of mRNA and methionyl-tRNAi to the 40S ribosome. The eIF-3 complex specifically targets and initiates translation of a subset of mRNAs involved in cell proliferation. The polypeptide is Eukaryotic translation initiation factor 3 subunit L (Coccidioides immitis (strain RS) (Valley fever fungus)).